The chain runs to 65 residues: Large ribosomal subunit protein bL35 (65 aa).

Residues 1–30 (MPKMKTVSGAAKRFKKTGSGRFKSKQSHLR) form a disordered region. Basic residues predominate over residues 12–30 (KRFKKTGSGRFKSKQSHLR).

Belongs to the bacterial ribosomal protein bL35 family.

This Alteromonas mediterranea (strain DSM 17117 / CIP 110805 / LMG 28347 / Deep ecotype) protein is Large ribosomal subunit protein bL35.